Here is a 343-residue protein sequence, read N- to C-terminus: Heat-inducible transcription repressor HrcA (343 aa).

Belongs to the HrcA family.

Functionally, negative regulator of class I heat shock genes (grpE-dnaK-dnaJ and groELS operons). Prevents heat-shock induction of these operons. The polypeptide is Heat-inducible transcription repressor HrcA (Thermoanaerobacter pseudethanolicus (strain ATCC 33223 / 39E) (Clostridium thermohydrosulfuricum)).